Consider the following 62-residue polypeptide: Large ribosomal subunit protein eL37 (62 aa).

Positions 20, 23, 35, and 38 each coordinate Zn(2+). The segment at 20–38 adopts a C4-type zinc-finger fold; sequence CRRCGRRSYHVRKKACSAC.

This sequence belongs to the eukaryotic ribosomal protein eL37 family. The cofactor is Zn(2+).

Binds to the 23S rRNA. The sequence is that of Large ribosomal subunit protein eL37 from Methanococcus aeolicus (strain ATCC BAA-1280 / DSM 17508 / OCM 812 / Nankai-3).